The sequence spans 120 residues: U13-lycotoxin-Ls1a (120 aa).

An N-terminal signal peptide occupies residues 1–16 (MKILFVLISILHAVYC). Positions 17 to 54 (FSSEEDVDSAYLANELEPVEDINSEQYAALEPKEEHER) are excised as a propeptide. Cystine bridges form between Cys-56/Cys-70, Cys-63/Cys-76, Cys-69/Cys-87, and Cys-78/Cys-85. The Agouti domain maps to 56–95 (CADMGQDCKDDCDCCLNIATCNCWFGRYFCSCTFGDYQTC).

The protein belongs to the neurotoxin 05 (agouti) family. Contains 6 disulfide bonds. As to expression, expressed by the venom gland.

The protein localises to the secreted. The protein is U13-lycotoxin-Ls1a of Lycosa singoriensis (Wolf spider).